We begin with the raw amino-acid sequence, 277 residues long: Urease accessory protein UreD (277 aa).

Positions 1–20 are disordered; that stretch reads MRQTAQEDASPAPMQRAHGT.

Belongs to the UreD family. In terms of assembly, ureD, UreF and UreG form a complex that acts as a GTP-hydrolysis-dependent molecular chaperone, activating the urease apoprotein by helping to assemble the nickel containing metallocenter of UreC. The UreE protein probably delivers the nickel.

Its subcellular location is the cytoplasm. Required for maturation of urease via the functional incorporation of the urease nickel metallocenter. This chain is Urease accessory protein UreD, found in Chelativorans sp. (strain BNC1).